Here is a 118-residue protein sequence, read N- to C-terminus: Large ribosomal subunit protein bL19 (118 aa).

The protein belongs to the bacterial ribosomal protein bL19 family.

Its function is as follows. This protein is located at the 30S-50S ribosomal subunit interface and may play a role in the structure and function of the aminoacyl-tRNA binding site. This Geobacter metallireducens (strain ATCC 53774 / DSM 7210 / GS-15) protein is Large ribosomal subunit protein bL19.